Reading from the N-terminus, the 858-residue chain is DNA mismatch repair protein MutS (858 aa).

Residue Gly-602–Ser-609 participates in ATP binding.

The protein belongs to the DNA mismatch repair MutS family.

Functionally, this protein is involved in the repair of mismatches in DNA. It is possible that it carries out the mismatch recognition step. This protein has a weak ATPase activity. Overexpression of mutSL partially suppresses the high spontaneous mutation frequency of a ytkD/mutM/mutY triple disruption which lacks the system required to prevent damage by oxidized guanine (8-oxo-dGTP). This suggests that MutSL also functions to repair mismatches due to oxidative stress in both growing and stationary phase cells. The protein is DNA mismatch repair protein MutS of Bacillus subtilis (strain 168).